We begin with the raw amino-acid sequence, 119 residues long: Large ribosomal subunit protein uL14 (119 aa).

It belongs to the universal ribosomal protein uL14 family. In terms of assembly, part of the 50S ribosomal subunit. Forms a cluster with proteins L3 and L19. In the 70S ribosome, L14 and L19 interact and together make contacts with the 16S rRNA in bridges B5 and B8.

Functionally, binds to 23S rRNA. Forms part of two intersubunit bridges in the 70S ribosome. The sequence is that of Large ribosomal subunit protein uL14 from Anaplasma marginale (strain St. Maries).